A 123-amino-acid chain; its full sequence is Keratin-associated protein 2-2 (123 aa).

The segment at 5–112 is 11 X 5 AA repeats of C-C-[CDPQRWG]-[APRS]-[CIPSTVD]; it reads CCGSTFSSLS…SVQSPCGQPT (108 aa).

It belongs to the KRTAP type 2 family. As to quaternary structure, interacts with hair keratins.

In terms of biological role, in the hair cortex, hair keratin intermediate filaments are embedded in an interfilamentous matrix, consisting of hair keratin-associated proteins (KRTAP), which are essential for the formation of a rigid and resistant hair shaft through their extensive disulfide bond cross-linking with abundant cysteine residues of hair keratins. The matrix proteins include the high-sulfur and high-glycine-tyrosine keratins. The protein is Keratin-associated protein 2-2 (KRTAP2-2) of Homo sapiens (Human).